A 77-amino-acid polypeptide reads, in one-letter code: Sec-independent protein translocase protein TatA (77 aa).

Residues 2–22 (GFGGISIWQLLIILLIVVMLF) form a helical membrane-spanning segment. 2 stretches are compositionally biased toward basic and acidic residues: residues 46–59 (DNGEAEKPAVEEPK) and 66–77 (QARKVEEPAKKD). A disordered region spans residues 46-77 (DNGEAEKPAVEEPKGQTIDAQARKVEEPAKKD).

The protein belongs to the TatA/E family. The Tat system comprises two distinct complexes: a TatABC complex, containing multiple copies of TatA, TatB and TatC subunits, and a separate TatA complex, containing only TatA subunits. Substrates initially bind to the TatABC complex, which probably triggers association of the separate TatA complex to form the active translocon.

It localises to the cell inner membrane. Its function is as follows. Part of the twin-arginine translocation (Tat) system that transports large folded proteins containing a characteristic twin-arginine motif in their signal peptide across membranes. TatA could form the protein-conducting channel of the Tat system. The polypeptide is Sec-independent protein translocase protein TatA (Ectopseudomonas mendocina (strain ymp) (Pseudomonas mendocina)).